The primary structure comprises 438 residues: MYAEETNNVTAIKDIRAREILDSRGNPTIEADVILADGTIGRAAAPSGASTGSREALELRDGDKSRYMGKGVKKAVANVNSQIRSALMDKNVTAQQAIDDAMIALDGTDNKDNLGANAILAVSLAVAKAAAKSQSLPLHQYIADLRNQTSLTMPVPMMNIINGGEHADNTVDIQEFMIEPVGFSSFSEALRAGTEIFHSLKSVLKSQGLNTAVGDEGGFAPNLRSNEEAITVIMQAIEQVGYTAGKDIHLALDCAATEFYKDGKYILAGEGNKSFDSQGFSDYLVGLARQYPIISIEDGLDESDWDGWKYLTEQIGDKVQLVGDDLFVTNPAILQEGIDKHIANAILIKFNQIGTLSETLDAIYLAKKNGYATIISHRSGETEDSTIADLAVGTAAGQIKTGSLCRSDRVAKYNQLLRIEQQVRASYRGREEFIGLRG.

Position 174 (Gln174) interacts with (2R)-2-phosphoglycerate. Catalysis depends on Glu216, which acts as the Proton donor. The Mg(2+) site is built by Asp253, Glu297, and Asp324. Positions 349, 378, 379, and 400 each coordinate (2R)-2-phosphoglycerate. The active-site Proton acceptor is the Lys349.

It belongs to the enolase family. As to quaternary structure, component of the RNA degradosome, a multiprotein complex involved in RNA processing and mRNA degradation. Mg(2+) serves as cofactor.

The protein resides in the cytoplasm. The protein localises to the secreted. Its subcellular location is the cell surface. It catalyses the reaction (2R)-2-phosphoglycerate = phosphoenolpyruvate + H2O. It participates in carbohydrate degradation; glycolysis; pyruvate from D-glyceraldehyde 3-phosphate: step 4/5. Functionally, catalyzes the reversible conversion of 2-phosphoglycerate (2-PG) into phosphoenolpyruvate (PEP). It is essential for the degradation of carbohydrates via glycolysis. The polypeptide is Enolase (Psychrobacter arcticus (strain DSM 17307 / VKM B-2377 / 273-4)).